The primary structure comprises 60 residues: Large ribosomal subunit protein bL32 (60 aa).

The protein belongs to the bacterial ribosomal protein bL32 family.

The polypeptide is Large ribosomal subunit protein bL32 (rpmF) (Borreliella burgdorferi (strain ATCC 35210 / DSM 4680 / CIP 102532 / B31) (Borrelia burgdorferi)).